The following is an 86-amino-acid chain: uncharacterized protein (86 aa).

This is an uncharacterized protein from Haemophilus influenzae (strain ATCC 51907 / DSM 11121 / KW20 / Rd).